Consider the following 311-residue polypeptide: Aspartate carbamoyltransferase catalytic subunit (311 aa).

Residues Arg59 and Thr60 each contribute to the carbamoyl phosphate site. An L-aspartate-binding site is contributed by Lys87. Positions 109, 139, and 142 each coordinate carbamoyl phosphate. L-aspartate-binding residues include Arg172 and Arg224. Carbamoyl phosphate contacts are provided by Ala265 and Pro266.

It belongs to the aspartate/ornithine carbamoyltransferase superfamily. ATCase family. Heterododecamer (2C3:3R2) of six catalytic PyrB chains organized as two trimers (C3), and six regulatory PyrI chains organized as three dimers (R2).

It catalyses the reaction carbamoyl phosphate + L-aspartate = N-carbamoyl-L-aspartate + phosphate + H(+). It participates in pyrimidine metabolism; UMP biosynthesis via de novo pathway; (S)-dihydroorotate from bicarbonate: step 2/3. Catalyzes the condensation of carbamoyl phosphate and aspartate to form carbamoyl aspartate and inorganic phosphate, the committed step in the de novo pyrimidine nucleotide biosynthesis pathway. This is Aspartate carbamoyltransferase catalytic subunit from Streptococcus equi subsp. equi (strain 4047).